The chain runs to 369 residues: Uroporphyrinogen decarboxylase (369 aa).

Residues R39, A41, R43, R52, D88, Y166, S221, and H341 each contribute to the coproporphyrinogen I site. Residues R39, A41, and R43 each coordinate coproporphyrinogen III. D88, Y166, S221, and H341 together coordinate coproporphyrinogen III.

Belongs to the uroporphyrinogen decarboxylase family. As to quaternary structure, homodimer.

The protein localises to the cytoplasm. It is found in the cytosol. The enzyme catalyses uroporphyrinogen III + 4 H(+) = coproporphyrinogen III + 4 CO2. It carries out the reaction uroporphyrinogen I + 4 H(+) = coproporphyrinogen I + 4 CO2. It functions in the pathway porphyrin-containing compound metabolism; protoporphyrin-IX biosynthesis; coproporphyrinogen-III from 5-aminolevulinate: step 4/4. Its function is as follows. Catalyzes the sequential decarboxylation of the four acetate side chains of uroporphyrinogen to form coproporphyrinogen and participates in the fifth step in the heme biosynthetic pathway. Isomer I or isomer III of uroporphyrinogen may serve as substrate, but only coproporphyrinogen III can ultimately be converted to heme. In vitro also decarboxylates pentacarboxylate porphyrinogen I. The chain is Uroporphyrinogen decarboxylase from Danio rerio (Zebrafish).